The chain runs to 207 residues: MAHRLVEELVREGVIKSESVRRAMLAVPREEFVMPEYRMMAYEDRPLPLFADATISAPHMVAMMCELVEPKPGMKILEVGAGSGYQAAVCAEAMERRGRVYTVEIVKELAIYAAQNIERLGYWGVVEVYHGDGRSGLERHAPFDAIIVTAAARQIPPALVRQLKEGGTLVIPLVEHMGQILYKVTKRGERVEKRAVTYVLFVPLRES.

Serine 56 is an active-site residue.

It belongs to the methyltransferase superfamily. L-isoaspartyl/D-aspartyl protein methyltransferase family.

The protein localises to the cytoplasm. It catalyses the reaction [protein]-L-isoaspartate + S-adenosyl-L-methionine = [protein]-L-isoaspartate alpha-methyl ester + S-adenosyl-L-homocysteine. Catalyzes the methyl esterification of L-isoaspartyl residues in peptides and proteins that result from spontaneous decomposition of normal L-aspartyl and L-asparaginyl residues. It plays a role in the repair and/or degradation of damaged proteins. This Pyrobaculum neutrophilum (strain DSM 2338 / JCM 9278 / NBRC 100436 / V24Sta) (Thermoproteus neutrophilus) protein is Protein-L-isoaspartate O-methyltransferase.